The chain runs to 287 residues: ATP synthase gamma chain (287 aa).

It belongs to the ATPase gamma chain family. F-type ATPases have 2 components, CF(1) - the catalytic core - and CF(0) - the membrane proton channel. CF(1) has five subunits: alpha(3), beta(3), gamma(1), delta(1), epsilon(1). CF(0) has three main subunits: a, b and c.

The protein localises to the cell inner membrane. Its function is as follows. Produces ATP from ADP in the presence of a proton gradient across the membrane. The gamma chain is believed to be important in regulating ATPase activity and the flow of protons through the CF(0) complex. The polypeptide is ATP synthase gamma chain (Serratia proteamaculans (strain 568)).